The chain runs to 236 residues: Urease accessory protein UreG 2 (236 aa).

Residues 1 to 40 (MEASVHIGNSVPHAHLHSAAPARPADPVRPDGSRRALRIG) form a disordered region. 43 to 50 (GPVGSGKT) serves as a coordination point for GTP.

Belongs to the SIMIBI class G3E GTPase family. UreG subfamily. Homodimer. UreD, UreF and UreG form a complex that acts as a GTP-hydrolysis-dependent molecular chaperone, activating the urease apoprotein by helping to assemble the nickel containing metallocenter of UreC. The UreE protein probably delivers the nickel.

Its subcellular location is the cytoplasm. Functionally, facilitates the functional incorporation of the urease nickel metallocenter. This process requires GTP hydrolysis, probably effectuated by UreG. The chain is Urease accessory protein UreG 2 from Saccharopolyspora erythraea (strain ATCC 11635 / DSM 40517 / JCM 4748 / NBRC 13426 / NCIMB 8594 / NRRL 2338).